The primary structure comprises 438 residues: GTPase Der (438 aa).

2 EngA-type G domains span residues 4-168 and 177-352; these read PIVA…PEGN and IRIA…GNYC. Residues 10–17, 57–61, 120–123, 183–190, 230–234, and 295–298 contribute to the GTP site; these read GRPNVGKS, DTGGI, NKID, DTAGL, and NKWD. One can recognise a KH-like domain in the interval 353–437; the sequence is KRIKTGILND…GIKLEFRERK (85 aa).

This sequence belongs to the TRAFAC class TrmE-Era-EngA-EngB-Septin-like GTPase superfamily. EngA (Der) GTPase family. In terms of assembly, associates with the 50S ribosomal subunit.

Its function is as follows. GTPase that plays an essential role in the late steps of ribosome biogenesis. The chain is GTPase Der from Clostridium novyi (strain NT).